Consider the following 79-residue polypeptide: D-alanyl carrier protein (79 aa).

A Carrier domain is found at 1–77 (MDVKETILNI…KIISGVVELM (77 aa)). The residue at position 35 (serine 35) is an O-(pantetheine 4'-phosphoryl)serine.

This sequence belongs to the DltC family. 4'-phosphopantetheine is transferred from CoA to a specific serine of apo-DCP.

Its subcellular location is the cytoplasm. Its pathway is cell wall biogenesis; lipoteichoic acid biosynthesis. Functionally, carrier protein involved in the D-alanylation of lipoteichoic acid (LTA). The loading of thioester-linked D-alanine onto DltC is catalyzed by D-alanine--D-alanyl carrier protein ligase DltA. The DltC-carried D-alanyl group is further transferred to cell membrane phosphatidylglycerol (PG) by forming an ester bond, probably catalyzed by DltD. D-alanylation of LTA plays an important role in modulating the properties of the cell wall in Gram-positive bacteria, influencing the net charge of the cell wall. The sequence is that of D-alanyl carrier protein from Streptococcus suis (strain 05ZYH33).